The sequence spans 210 residues: N-(5'-phosphoribosyl)anthranilate isomerase (210 aa).

It belongs to the TrpF family.

It catalyses the reaction N-(5-phospho-beta-D-ribosyl)anthranilate = 1-(2-carboxyphenylamino)-1-deoxy-D-ribulose 5-phosphate. Its pathway is amino-acid biosynthesis; L-tryptophan biosynthesis; L-tryptophan from chorismate: step 3/5. This is N-(5'-phosphoribosyl)anthranilate isomerase from Trichormus variabilis (strain ATCC 29413 / PCC 7937) (Anabaena variabilis).